The sequence spans 144 residues: MKTLLLLAVIMIFGLLQAHGNLVNFHRMIKLTTGKEAALSYGFYGCHCGVGGRGSPKDATDRCCVTHDCCYKRLEKRGCGTKFLSYKFSNSGSRITCAKQDSCRSQLCECDKAAATCFARNKTTYNKKYQYYSNKHCRGSTPRC.

The first 20 residues, 1–20 (MKTLLLLAVIMIFGLLQAHG), serve as a signal peptide directing secretion. Cystine bridges form between Cys-46–Cys-137, Cys-48–Cys-64, Cys-63–Cys-117, Cys-69–Cys-144, Cys-70–Cys-110, Cys-79–Cys-103, and Cys-97–Cys-108. Ca(2+)-binding residues include His-47, Gly-49, and Gly-51. Residue His-67 is part of the active site. Asp-68 provides a ligand contact to Ca(2+). Residue Asp-111 is part of the active site.

This sequence belongs to the phospholipase A2 family. Ca(2+) serves as cofactor. Expressed in various tissues including heart, kidney, liver, lung, pancreas, placenta, skeletal muscle, prostate, ovary, colon and small intestine. Not detected in lymphoid organs and brain. Expressed in platelets (at protein level).

Its subcellular location is the secreted. It is found in the cell membrane. The protein localises to the mitochondrion outer membrane. It carries out the reaction a 1,2-diacyl-sn-glycero-3-phosphoethanolamine + H2O = a 1-acyl-sn-glycero-3-phosphoethanolamine + a fatty acid + H(+). It catalyses the reaction 1-hexadecanoyl-2-(9Z-octadecenoyl)-sn-glycero-3-phosphoethanolamine + H2O = 1-hexadecanoyl-sn-glycero-3-phosphoethanolamine + (9Z)-octadecenoate + H(+). The enzyme catalyses 1-hexadecanoyl-2-(9Z,12Z-octadecadienoyl)-sn-glycero-3-phosphoethanolamine + H2O = 1-hexadecanoyl-sn-glycero-3-phosphoethanolamine + (9Z,12Z)-octadecadienoate + H(+). The catalysed reaction is 1-hexadecanoyl-2-(5Z,8Z,11Z,14Z-eicosatetraenoyl)-sn-glycero-3-phosphoethanolamine + H2O = 1-hexadecanoyl-sn-glycero-3-phosphoethanolamine + (5Z,8Z,11Z,14Z)-eicosatetraenoate + H(+). It carries out the reaction N-hexadecanoyl-1,2-di-(9Z-octadecenoyl)-sn-glycero-3-phosphoethanolamine + H2O = N-hexadecanoyl-1-(9Z-octadecenoyl)-sn-glycero-3-phosphoethanolamine + (9Z)-octadecenoate + H(+). It catalyses the reaction 1,2-dihexadecanoyl-sn-glycero-3-phospho-(1'-sn-glycerol) + H2O = 1-hexadecanoyl-sn-glycero-3-phospho-(1'-sn-glycerol) + hexadecanoate + H(+). The enzyme catalyses 1-hexadecanoyl-2-(9Z-octadecenoyl)-sn-glycero-3-phosphoglycerol + H2O = 1-hexadecanoyl-sn-glycero-3-phosphoglycerol + (9Z)-octadecenoate + H(+). The catalysed reaction is 1-hexadecanoyl-2-(9Z-octadecenoyl)-sn-glycero-3-phospho-(1'-sn-glycerol) + H2O = 1-hexadecanoyl-sn-glycero-3-phospho-(1'-sn-glycerol) + (9Z)-octadecenoate + H(+). It carries out the reaction a 1,2-diacyl-sn-glycero-3-phosphocholine + H2O = a 1-acyl-sn-glycero-3-phosphocholine + a fatty acid + H(+). It catalyses the reaction 1,2-dihexadecanoyl-sn-glycero-3-phosphocholine + H2O = 1-hexadecanoyl-sn-glycero-3-phosphocholine + hexadecanoate + H(+). The enzyme catalyses 1-hexadecanoyl-2-(9Z-octadecenoyl)-sn-glycero-3-phosphocholine + H2O = 1-hexadecanoyl-sn-glycero-3-phosphocholine + (9Z)-octadecenoate + H(+). The catalysed reaction is 1-hexadecanoyl-2-(9Z,12Z-octadecadienoyl)-sn-glycero-3-phosphocholine + H2O = (9Z,12Z)-octadecadienoate + 1-hexadecanoyl-sn-glycero-3-phosphocholine + H(+). It carries out the reaction 1-hexadecanoyl-2-(4Z,7Z,10Z,13Z,16Z,19Z-docosahexaenoyl)-sn-glycero-3-phosphocholine + H2O = (4Z,7Z,10Z,13Z,16Z,19Z)-docosahexaenoate + 1-hexadecanoyl-sn-glycero-3-phosphocholine + H(+). Functionally, secretory calcium-dependent phospholipase A2 that primarily targets extracellular phospholipids with implications in host antimicrobial defense, inflammatory response and tissue regeneration. Hydrolyzes the ester bond of the fatty acyl group attached at sn-2 position of phospholipids (phospholipase A2 activity) with preference for phosphatidylethanolamines and phosphatidylglycerols over phosphatidylcholines. Contributes to lipid remodeling of cellular membranes and generation of lipid mediators involved in pathogen clearance. Displays bactericidal activity against Gram-positive bacteria by directly hydrolyzing phospholipids of the bacterial membrane. Upon sterile inflammation, targets membrane phospholipids of extracellular mitochondria released from activated platelets, generating free unsaturated fatty acids such as arachidonate that is used by neighboring leukocytes to synthesize inflammatory eicosanoids such as leukotrienes. Simultaneously, by compromising mitochondrial membrane integrity, promotes the release in circulation of potent damage-associated molecular pattern molecules that activate the innate immune response. Plays a stem cell regulator role in the intestinal crypt. Within intracellular compartment mediates Paneth cell differentiation and its stem cell supporting functions by inhibiting Wnt signaling pathway in intestinal stem cell (ICS). Secreted in the intestinal lumen upon inflammation, acts in an autocrine way and promotes prostaglandin E2 synthesis that stimulates Wnt signaling pathway in ICS cells and tissue regeneration. May play a role in the biosynthesis of N-acyl ethanolamines that regulate energy metabolism and inflammation. Hydrolyzes N-acyl phosphatidylethanolamines to N-acyl lysophosphatidylethanolamines, which are further cleaved by a lysophospholipase D to release N-acyl ethanolamines. Independent of its catalytic activity, acts as a ligand for integrins. Binds to and activates integrins ITGAV:ITGB3, ITGA4:ITGB1 and ITGA5:ITGB1. Binds to a site (site 2) which is distinct from the classical ligand-binding site (site 1) and induces integrin conformational changes and enhanced ligand binding to site 1. Induces cell proliferation in an integrin-dependent manner. This chain is Phospholipase A2, membrane associated (PLA2G2A), found in Homo sapiens (Human).